We begin with the raw amino-acid sequence, 343 residues long: MDSEEIPTFSSPKEETAYWKELSLKYKQSFQEAREELAEFQEGSRELEAELEAQLVQAEQRNRDLQADNQRLKYEVETLKEKLEHQYAQSYKQVSLLEDDLSQTRAIKDQLHKYVRELEQANDDLERAKRATIVSLEDFEQRLNQAIERNAFLESELDDKESLLVSVQRLKDEARDLRQELAVRERQQEVTRKSAPSSPTLDCEKMDSAVQASLSLPATPVGKGSENSFPSPKAIPNGFGTSPLTPSARISALNIVGDLLRKVGALESKLAACRNFAKDQASRKSYISGNANSSMMSSNGTKYPHPGHTSFFDKGAVNGFDQGTPGLGASRPSSAPGMLPLSV.

The stretch at 25–190 (KYKQSFQEAR…LAVRERQQEV (166 aa)) forms a coiled coil. Disordered stretches follow at residues 184–204 (RERQQEVTRKSAPSSPTLDCE) and 322–343 (QGTPGLGASRPSSAPGMLPLSV).

The protein belongs to the nudE family. Phosphorylated in mitosis.

The protein resides in the cytoplasm. It is found in the cytoskeleton. The protein localises to the microtubule organizing center. Its subcellular location is the centrosome. It localises to the spindle. Functionally, required for organization of the cellular microtubule array and microtubule anchoring at the centrosome. Positively regulates the activity of the minus-end directed microtubule motor protein dynein. May enhance dynein-mediated microtubule sliding by targeting dynein to the microtubule plus end. Positively regulates lysosome peripheral distribution and ruffled border formation in osteoclasts. The protein is Nuclear distribution protein nudE-like 1 (NDEL1) of Gallus gallus (Chicken).